We begin with the raw amino-acid sequence, 793 residues long: Serine/threonine-protein phosphatase BSU1 (793 aa).

5 Kelch repeats span residues 53–109 (STTA…LYGT), 110–160 (LILI…IAAQ), 214–262 (IFLL…VFGG), 264–314 (KLHV…NQYQ), and 329–388 (HLYV…EASS). Phosphoserine occurs at positions 395 and 444. Mn(2+) is bound by residues Asp510, His512, Asp544, and Asn576. The active-site Proton donor is the His577. Residues His629 and His707 each coordinate Mn(2+). Ser764 carries the phosphoserine modification.

It belongs to the PPP phosphatase family. BSU subfamily. As to quaternary structure, interacts with CDG1, CDL1 and ASK7/BIN2. Requires Mn(2+) as cofactor. Post-translationally, phosphorylated at Ser-395 and Ser-444. Phosphorylated at Ser-764 by CDG1 and CDL1. Mainly expressed in young, elongating tissues. In young seedlings, it is expressed at the base of the hypocotyl, at the tip and most peripheral cell layers of cotyledons, and in the vascular cylinder of roots, particularly in the elongation zone and at the point of emergence of lateral roots. In mature plants, it is still present in the root vasculature, but almost completely absent in fully expanded stems and leaves. In flowers, it is mainly expressed in sepal veins, anther filaments, and in the style, suggesting that BSU1 is expressed in actively growing regions and apparently enriched in vascular tissues.

The protein resides in the nucleus. It carries out the reaction O-phospho-L-seryl-[protein] + H2O = L-seryl-[protein] + phosphate. The enzyme catalyses O-phospho-L-threonyl-[protein] + H2O = L-threonyl-[protein] + phosphate. Its activity is regulated as follows. Activated by phosphorylation at Ser-764 by CDG1. In terms of biological role, phosphatase that acts as a positive regulator of brassinosteroid (BR) signaling. Dephosphorylates BES1, a transcription factor that regulates the expression of BR-response genes, thereby playing an important role in the regulation of response to BRs. Inactivates the negative regulator of BR signaling ASK7/BIN2 by dephosphorylation at 'Tyr-200'. The protein is Serine/threonine-protein phosphatase BSU1 (BSU1) of Arabidopsis thaliana (Mouse-ear cress).